Here is a 2200-residue protein sequence, read N- to C-terminus: Bromodomain and WD repeat-containing DDB_G0285837 (2200 aa).

Disordered stretches follow at residues 137-178, 194-245, and 259-288; these read GFND…SNTN, VTPT…TTPP, and DIQQQQQQQQQQQQQTISKSKNEDINNNNN. Low complexity-rich tracts occupy residues 161–176, 203–242, and 259–273; these read NNNNNNSSSSSSSNSN, NTTNTTTTTTATTTTTTTTTTTNNTNVQTTPTNTTNTTLT, and DIQQQQQQQQQQQQQ. 8 WD repeats span residues 352–391, 394–433, 442–483, 548–586, 591–630, 653–691, 694–736, and 741–780; these read GHKAPTYCLQFDKSGRLYFTGSDDHLVKVWSTYSGRLIAT, GHLGDITDMCTSFDNSLLATASNDNVIRIWNLNSNQYDSI, SVNN…HVIS, GKTNEITGTTMNKGGTLIVASVDSSLKIWSTLFNPPKLV, GHPTTILALQYSHGSDAIVSGSYDGTVIIWRHSGGPKWDH, RSKATFKNVIWSHDDRFIITTDYNMIRVWNSLDGSFHLE, EHTS…KKFV, and GFQCQILDGCFSPDGQKFIVTNSTGKWFMFELGLGSDINN. Composition is skewed to acidic residues over residues 918–933 and 955–968; these read DDEIIFPSDPSDEDFN and QDDDDDDDDDEDYD. Disordered regions lie at residues 918–1180, 1262–1297, 1461–1538, and 1662–1703; these read DDEI…NHLT, NNNNNNNNNNNNNNNNNNNNNNNGVDDQQINSDDDD, ENNQ…NNNN, and NFNS…NNNN. Positions 974-1000 are enriched in basic residues; that stretch reads MSTRKKSKIKADKRKKRLLKQSKKFTR. The segment covering 1052–1074 has biased composition (acidic residues); that stretch reads GEIEMDDDDQYLNDNILDSDDND. Low complexity predominate over residues 1109–1132; it reads SSDNSSENDSSANGSDSDYSGSKS. A compositionally biased stretch (basic residues) spans 1133 to 1164; sequence NKNKRGDKSKRNKKGKKNVKNKKVQKRGRKKS. 2 stretches are compositionally biased toward low complexity: residues 1262–1292 and 1461–1525; these read NNNNNNNNNNNNNNNNNNNNNNNGVDDQQIN and ENNQ…NSLN. The region spanning 1722–1823 is the Bromo domain; it reads EKIENLKKEM…HRISDILKEA (102 aa). Positions 1850–2200 are disordered; the sequence is DKDDSQLDDE…RGRGRPPKSN (351 aa). The span at 1878–1888 shows a compositional bias: low complexity; the sequence is LANNNHGNNKS. The segment covering 1910 to 1920 has biased composition (polar residues); sequence TGKNITRSLLS. The span at 1945–1958 shows a compositional bias: low complexity; it reads TTTTTTTTTTTSST. 3 stretches are compositionally biased toward acidic residues: residues 2016–2028, 2057–2073, and 2104–2113; these read DYNDDDDDDDNDG, EDEDEDDNNQEEDEEDY, and SEEEEDEDQS. Over residues 2114-2124 the composition is skewed to low complexity; it reads DVNSNNNSDNE. A compositionally biased stretch (acidic residues) spans 2125–2138; sequence SGGEDGYSGEDGSE. Positions 2170-2185 are enriched in low complexity; it reads SFKNNNNNNNINNNVN. Residues 2190–2200 are compositionally biased toward basic residues; that stretch reads KRGRGRPPKSN.

The sequence is that of Bromodomain and WD repeat-containing DDB_G0285837 from Dictyostelium discoideum (Social amoeba).